We begin with the raw amino-acid sequence, 262 residues long: Acyl-[acyl-carrier-protein]--UDP-N-acetylglucosamine O-acyltransferase (262 aa).

The protein belongs to the transferase hexapeptide repeat family. LpxA subfamily. Homotrimer.

It localises to the cytoplasm. The catalysed reaction is a (3R)-hydroxyacyl-[ACP] + UDP-N-acetyl-alpha-D-glucosamine = a UDP-3-O-[(3R)-3-hydroxyacyl]-N-acetyl-alpha-D-glucosamine + holo-[ACP]. It functions in the pathway glycolipid biosynthesis; lipid IV(A) biosynthesis; lipid IV(A) from (3R)-3-hydroxytetradecanoyl-[acyl-carrier-protein] and UDP-N-acetyl-alpha-D-glucosamine: step 1/6. Its function is as follows. Involved in the biosynthesis of lipid A, a phosphorylated glycolipid that anchors the lipopolysaccharide to the outer membrane of the cell. The polypeptide is Acyl-[acyl-carrier-protein]--UDP-N-acetylglucosamine O-acyltransferase (Enterobacter sp. (strain 638)).